Here is a 345-residue protein sequence, read N- to C-terminus: Protein-glutamate methylesterase/protein-glutamine glutaminase 2 (345 aa).

In terms of domain architecture, Response regulatory spans 7–124 (KVLVVDDSPV…TADMLGYRSL (118 aa)). At aspartate 58 the chain carries 4-aspartylphosphate. In terms of domain architecture, CheB-type methylesterase spans 154–345 (STSQYQLIAI…LPQFLCDLLS (192 aa)). Active-site residues include serine 166, histidine 192, and aspartate 289.

It belongs to the CheB family. Phosphorylated by CheA. Phosphorylation of the N-terminal regulatory domain activates the methylesterase activity.

Its subcellular location is the cytoplasm. It catalyses the reaction [protein]-L-glutamate 5-O-methyl ester + H2O = L-glutamyl-[protein] + methanol + H(+). The catalysed reaction is L-glutaminyl-[protein] + H2O = L-glutamyl-[protein] + NH4(+). Functionally, involved in chemotaxis. Part of a chemotaxis signal transduction system that modulates chemotaxis in response to various stimuli. Catalyzes the demethylation of specific methylglutamate residues introduced into the chemoreceptors (methyl-accepting chemotaxis proteins or MCP) by CheR. Also mediates the irreversible deamidation of specific glutamine residues to glutamic acid. This is Protein-glutamate methylesterase/protein-glutamine glutaminase 2 from Vibrio vulnificus (strain YJ016).